The sequence spans 345 residues: Isopentenyl-diphosphate delta-isomerase (345 aa).

Residue 6–7 (RK) coordinates substrate. Residues 63-65 (SMT), serine 93, and asparagine 122 each bind FMN. A substrate-binding site is contributed by 93 to 95 (SQR). Position 156 (glutamine 156) interacts with substrate. Glutamate 157 contributes to the Mg(2+) binding site. FMN contacts are provided by residues lysine 188, threonine 218, 265 to 267 (GLR), and 286 to 287 (AL).

Belongs to the IPP isomerase type 2 family. Homooctamer. Dimer of tetramers. FMN serves as cofactor. It depends on NADPH as a cofactor. Requires Mg(2+) as cofactor.

It localises to the cytoplasm. It carries out the reaction isopentenyl diphosphate = dimethylallyl diphosphate. Its function is as follows. Involved in the biosynthesis of isoprenoids. Catalyzes the 1,3-allylic rearrangement of the homoallylic substrate isopentenyl (IPP) to its allylic isomer, dimethylallyl diphosphate (DMAPP). The sequence is that of Isopentenyl-diphosphate delta-isomerase from Archaeoglobus fulgidus (strain ATCC 49558 / DSM 4304 / JCM 9628 / NBRC 100126 / VC-16).